Consider the following 134-residue polypeptide: Large ribosomal subunit protein uL22 (134 aa).

This sequence belongs to the universal ribosomal protein uL22 family. As to quaternary structure, part of the 50S ribosomal subunit.

Its function is as follows. This protein binds specifically to 23S rRNA; its binding is stimulated by other ribosomal proteins, e.g. L4, L17, and L20. It is important during the early stages of 50S assembly. It makes multiple contacts with different domains of the 23S rRNA in the assembled 50S subunit and ribosome. In terms of biological role, the globular domain of the protein is located near the polypeptide exit tunnel on the outside of the subunit, while an extended beta-hairpin is found that lines the wall of the exit tunnel in the center of the 70S ribosome. The sequence is that of Large ribosomal subunit protein uL22 from Porphyromonas gingivalis (strain ATCC 33277 / DSM 20709 / CIP 103683 / JCM 12257 / NCTC 11834 / 2561).